The sequence spans 487 residues: 2-aminomuconic semialdehyde dehydrogenase (487 aa).

Position 209-215 (209-215 (GTGPRVG)) interacts with NAD(+). Glu-253 (proton acceptor) is an active-site residue. Cys-287 functions as the Nucleophile in the catalytic mechanism. Residue Ser-362 is modified to Phosphoserine.

Belongs to the aldehyde dehydrogenase family. Highly expressed in adult kidney and liver. Detected at lower levels in fetal liver and kidney.

The protein localises to the cytoplasm. The catalysed reaction is 2-aminomuconate 6-semialdehyde + NAD(+) + H2O = (2Z,4E)-2-aminomuconate + NADH + 2 H(+). It functions in the pathway amino-acid degradation; L-kynurenine degradation. Functionally, catalyzes the NAD-dependent oxidation of 2-aminomuconic semialdehyde of the kynurenine metabolic pathway in L-tryptophan degradation. The sequence is that of 2-aminomuconic semialdehyde dehydrogenase from Homo sapiens (Human).